The sequence spans 910 residues: Putative coatomer subunit beta'-3 (910 aa).

9 WD repeats span residues 13–52, 55–94, 97–136, 140–180, 183–224, 227–266, 269–309, 351–393, and 461–501; these read QRSE…MVKS, VTEL…KVKV, AHTD…MCTQ, GHSH…PNFT, GHSK…CVQT, GHAH…LENT, YGLE…ASMD, TCDL…GSAL, and RIDV…SHLD. Over residues 865-884 the composition is skewed to acidic residues; the sequence is ENGVEESQEDAVEVDVEADG. The segment at 865–910 is disordered; sequence ENGVEESQEDAVEVDVEADGSTDGTVLVNGNDTEEQWGTNNEESLA. Residues 886–910 show a composition bias toward polar residues; sequence TDGTVLVNGNDTEEQWGTNNEESLA.

This sequence belongs to the WD repeat COPB2 family. As to quaternary structure, oligomeric complex that consists of at least the alpha, beta, beta', gamma, delta, epsilon and zeta subunits.

The protein localises to the cytoplasm. It is found in the golgi apparatus membrane. It localises to the cytoplasmic vesicle. Its subcellular location is the COPI-coated vesicle membrane. Functionally, the coatomer is a cytosolic protein complex that binds to dilysine motifs and reversibly associates with Golgi non-clathrin-coated vesicles, which further mediate biosynthetic protein transport from the ER, via the Golgi up to the trans Golgi network. Coatomer complex is required for budding from Golgi membranes, and is essential for the retrograde Golgi-to-ER transport of dilysine-tagged proteins. The chain is Putative coatomer subunit beta'-3 from Oryza sativa subsp. japonica (Rice).